A 240-amino-acid polypeptide reads, in one-letter code: 1-(5-phosphoribosyl)-5-[(5-phosphoribosylamino)methylideneamino] imidazole-4-carboxamide isomerase (240 aa).

The active-site Proton acceptor is the Asp8. The Proton donor role is filled by Asp129.

This sequence belongs to the HisA/HisF family.

It is found in the cytoplasm. It catalyses the reaction 1-(5-phospho-beta-D-ribosyl)-5-[(5-phospho-beta-D-ribosylamino)methylideneamino]imidazole-4-carboxamide = 5-[(5-phospho-1-deoxy-D-ribulos-1-ylimino)methylamino]-1-(5-phospho-beta-D-ribosyl)imidazole-4-carboxamide. The protein operates within amino-acid biosynthesis; L-histidine biosynthesis; L-histidine from 5-phospho-alpha-D-ribose 1-diphosphate: step 4/9. The sequence is that of 1-(5-phosphoribosyl)-5-[(5-phosphoribosylamino)methylideneamino] imidazole-4-carboxamide isomerase from Listeria monocytogenes serotype 4b (strain CLIP80459).